Consider the following 73-residue polypeptide: Small ribosomal subunit protein bS18c (73 aa).

The protein belongs to the bacterial ribosomal protein bS18 family. Part of the 30S ribosomal subunit.

It is found in the plastid. The protein localises to the chloroplast. This is Small ribosomal subunit protein bS18c from Nephroselmis olivacea (Green alga).